Here is a 112-residue protein sequence, read N- to C-terminus: uncharacterized protein (112 aa).

The disordered stretch occupies residues 70–112 (GLYRGRRPPGRDAARPTTAILFAQGRPPLLDQRAPTRRGSHQR).

This is an uncharacterized protein from Homo sapiens (Human).